Here is a 352-residue protein sequence, read N- to C-terminus: 4-hydroxybenzaldehyde synthase, chloroplastic (352 aa).

Residue asparagine 122 is glycosylated (N-linked (GlcNAc...) asparagine). 2 disulfide bridges follow: cysteine 159-cysteine 199 and cysteine 190-cysteine 231. The N-linked (GlcNAc...) asparagine glycan is linked to asparagine 247. A disulfide bond links cysteine 289 and cysteine 339. Active-site residues include histidine 298 and asparagine 318.

It belongs to the peptidase C1 family. As to quaternary structure, forms homodimers, homotrimers and homotetramers. Mainly expressed in pods, but also present in stems, roots, leaves and embryos (at protein level).

Its subcellular location is the plastid. It localises to the chloroplast. The catalysed reaction is (E)-4-coumarate + H2O = 4-hydroxybenzaldehyde + acetate. Its pathway is aromatic compound metabolism; phenylpropanoid biosynthesis. Inhibited by ascorbate. Functionally, involved in the biosynthesis of vanillin (4-hydroxy-3-methoxy-benzaldehyde) and derivative natural products, key components of vanilla pods flavor. Catalyzes the conversion of (E)-4-coumarate to 4-hydroxybenzaldehyde, a vanillin precursor. Mediates the conversion of ferulic acid to 3-methoxy-4-hydroxybenzaldehyde with a very low efficiency. Cannot use cinnamic, caffeic, sinapic and o-coumaric acids as substrates. In Vanilla planifolia (Vanilla), this protein is 4-hydroxybenzaldehyde synthase, chloroplastic.